The primary structure comprises 431 residues: Glutamate-1-semialdehyde 2,1-aminomutase (431 aa).

Residue lysine 265 is modified to N6-(pyridoxal phosphate)lysine.

This sequence belongs to the class-III pyridoxal-phosphate-dependent aminotransferase family. HemL subfamily. In terms of assembly, homodimer. Requires pyridoxal 5'-phosphate as cofactor.

Its subcellular location is the cytoplasm. It carries out the reaction (S)-4-amino-5-oxopentanoate = 5-aminolevulinate. Its pathway is porphyrin-containing compound metabolism; protoporphyrin-IX biosynthesis; 5-aminolevulinate from L-glutamyl-tRNA(Glu): step 2/2. This Aliivibrio salmonicida (strain LFI1238) (Vibrio salmonicida (strain LFI1238)) protein is Glutamate-1-semialdehyde 2,1-aminomutase.